A 107-amino-acid polypeptide reads, in one-letter code: Anti-adapter protein IraM (107 aa).

It belongs to the IraM/RssC family.

The protein localises to the cytoplasm. In terms of biological role, inhibits RpoS proteolysis by regulating RssB activity, thereby increasing the stability of the sigma stress factor RpoS during magnesium starvation. The sequence is that of Anti-adapter protein IraM from Escherichia coli O17:K52:H18 (strain UMN026 / ExPEC).